The sequence spans 397 residues: 2-oxoglutarate and iron-dependent oxygenase domain-containing protein ICU11 (397 aa).

A disordered region spans residues 1–56 (MCNQTPLRSMALDSSGKQPEQQQQQQPRASSGNGEARLKLRRTPNEEHEPENYEDL). Residues 18-27 (QPEQQQQQQP) are compositionally biased toward low complexity. The 102-residue stretch at 238-339 (SLDSHHGYIV…RANLILWCRS (102 aa)) folds into the Fe2OG dioxygenase domain. Residues histidine 260, aspartate 262, and histidine 320 each contribute to the Fe cation site. A 2-oxoglutarate-binding site is contributed by arginine 330.

Requires Fe(2+) as cofactor. L-ascorbate serves as cofactor. Expressed in roots, cotyledons, rosette leaves, cauline leaves and inflorescences.

Its subcellular location is the nucleus. It localises to the nucleoplasm. Participates in the epigenetic repression of flowering genes in association with CP2. Functions in the repression of several members of the MADS-box transcription factors family, including SEP3, during vegetative development via histone modification. The polypeptide is 2-oxoglutarate and iron-dependent oxygenase domain-containing protein ICU11 (Arabidopsis thaliana (Mouse-ear cress)).